Here is a 203-residue protein sequence, read N- to C-terminus: Adenosylcobalamin/alpha-ribazole phosphatase (203 aa).

His-8 functions as the Tele-phosphohistidine intermediate in the catalytic mechanism. Glu-81 functions as the Proton donor/acceptor in the catalytic mechanism.

The protein belongs to the phosphoglycerate mutase family.

It carries out the reaction adenosylcob(III)alamin 5'-phosphate + H2O = adenosylcob(III)alamin + phosphate. The enzyme catalyses alpha-ribazole 5'-phosphate + H2O = alpha-ribazole + phosphate. It participates in nucleoside biosynthesis; alpha-ribazole biosynthesis; alpha-ribazole from 5,6-dimethylbenzimidazole: step 2/2. In terms of biological role, catalyzes the conversion of adenosylcobalamin 5'-phosphate to adenosylcobalamin (vitamin B12); involved in the assembly of the nucleotide loop of cobalamin. Also catalyzes the hydrolysis of the phospho group from alpha-ribazole 5'-phosphate to form alpha-ribazole. In Escherichia coli (strain K12), this protein is Adenosylcobalamin/alpha-ribazole phosphatase (cobC).